Here is a 742-residue protein sequence, read N- to C-terminus: Envelope glycoprotein H (742 aa).

The N-terminal stretch at 1 to 23 is a signal peptide; sequence MRPGLPSYLIILAVCLFSHLLSS. The Virion surface portion of the chain corresponds to 24 to 719; it reads RYGAEAVSEP…VVDATDSRLL (696 aa). N-linked (GlcNAc...) asparagine; by host glycans are attached at residues Asn-55, Asn-62, Asn-67, and Asn-192. Cys-195 and Cys-211 form a disulfide bridge. The tract at residues 217 to 280 is interaction with gL; that stretch reads YLIDELRYVK…QTEKHELLVL (64 aa). 3 cysteine pairs are disulfide-bonded: Cys-330-Cys-383, Cys-495-Cys-522, and Cys-571-Cys-624. 2 N-linked (GlcNAc...) asparagine; by host glycosylation sites follow: Asn-641 and Asn-700. The chain crosses the membrane as a helical span at residues 720–740; the sequence is MMSVYALSAIIGIYLLYRMLK. Topologically, residues 741 to 742 are intravirion; sequence TC.

This sequence belongs to the herpesviridae glycoprotein H family. Interacts with glycoprotein L (gL); this interaction is necessary for the correct processing and cell surface expression of gH. The heterodimer gH/gL seems to interact with gB trimers during fusion. Forms the envelope pentamer complex (PC) composed of gH, gL, UL128, UL130, and UL131A. The pentamer interacts with host NRP2. Forms the envelope trimer complex composed of gH, gL, and gO. The trimer interacts with host PDGFRA. The trimer also interacts with host EPHA2. The trimer also interacts with host TGFBR3. Interacts with UL116. In terms of processing, N-glycosylated, O-glycosylated, and sialylated.

Its subcellular location is the virion membrane. The protein localises to the host cell membrane. It localises to the host endosome membrane. The heterodimer glycoprotein H-glycoprotein L is required for the fusion of viral and plasma membranes leading to virus entry into the host cell. Following initial binding to host receptor, membrane fusion is mediated by the fusion machinery composed of gB and the heterodimer gH/gL. May also be involved in the fusion between the virion envelope and the outer nuclear membrane during virion morphogenesis. In human cytomegalovirus, forms two distincts complexes to mediate viral entry, a trimer and a pentamer at the surface of the virion envelope. The gH-gL-gO trimer is required for infection in fibroblasts by interacting with host PDGFRA, and in glioblastoma cells by interacting with host EPHA2. Thsi trimer may also be required in other cell types using host TGFBR3. The gH-gL-UL128-UL130-UL131A pentamer is essential for viral entry in epithelial, endothelial and myeloid cells via interaction with host NRP2. The sequence is that of Envelope glycoprotein H from Human cytomegalovirus (strain Merlin) (HHV-5).